Here is an 82-residue protein sequence, read N- to C-terminus: Small ribosomal subunit protein eS27 (82 aa).

Residues 37–59 (CPGCFTITTVFSHAQTVVICQGC) form a C4-type zinc finger.

This sequence belongs to the eukaryotic ribosomal protein eS27 family. As to quaternary structure, component of the small ribosomal subunit (SSU). Mature N.crassa ribosomes consist of a small (40S) and a large (60S) subunit. The 40S small subunit contains 1 molecule of ribosomal RNA (18S rRNA) and at least 32 different proteins. The large 60S subunit contains 3 rRNA molecules (26S, 5.8S and 5S rRNA) and at least 42 different proteins. Zn(2+) is required as a cofactor.

It is found in the cytoplasm. In terms of biological role, component of the ribosome, a large ribonucleoprotein complex responsible for the synthesis of proteins in the cell. The small ribosomal subunit (SSU) binds messenger RNAs (mRNAs) and translates the encoded message by selecting cognate aminoacyl-transfer RNA (tRNA) molecules. The large subunit (LSU) contains the ribosomal catalytic site termed the peptidyl transferase center (PTC), which catalyzes the formation of peptide bonds, thereby polymerizing the amino acids delivered by tRNAs into a polypeptide chain. The nascent polypeptides leave the ribosome through a tunnel in the LSU and interact with protein factors that function in enzymatic processing, targeting, and the membrane insertion of nascent chains at the exit of the ribosomal tunnel. The sequence is that of Small ribosomal subunit protein eS27 (crp-6) from Neurospora crassa (strain ATCC 24698 / 74-OR23-1A / CBS 708.71 / DSM 1257 / FGSC 987).